The following is a 188-amino-acid chain: Elongation factor P-like protein (188 aa).

Belongs to the elongation factor P family.

This chain is Elongation factor P-like protein, found in Xanthomonas campestris pv. campestris (strain 8004).